A 440-amino-acid polypeptide reads, in one-letter code: Thymidine phosphorylase (440 aa).

This sequence belongs to the thymidine/pyrimidine-nucleoside phosphorylase family. As to quaternary structure, homodimer.

The enzyme catalyses thymidine + phosphate = 2-deoxy-alpha-D-ribose 1-phosphate + thymine. It participates in pyrimidine metabolism; dTMP biosynthesis via salvage pathway; dTMP from thymine: step 1/2. Functionally, the enzymes which catalyze the reversible phosphorolysis of pyrimidine nucleosides are involved in the degradation of these compounds and in their utilization as carbon and energy sources, or in the rescue of pyrimidine bases for nucleotide synthesis. The protein is Thymidine phosphorylase of Salmonella arizonae (strain ATCC BAA-731 / CDC346-86 / RSK2980).